The following is a 395-amino-acid chain: Tryptophan--tRNA ligase, cytoplasmic (395 aa).

Residues 91–100 (PSSDSMHLGH) carry the 'HIGH' region motif. The 'KMSKS' region signature appears at 275-279 (KMSAS). Residues T288 and T290 each carry the phosphothreonine modification.

It belongs to the class-I aminoacyl-tRNA synthetase family.

The protein localises to the cytoplasm. It carries out the reaction tRNA(Trp) + L-tryptophan + ATP = L-tryptophyl-tRNA(Trp) + AMP + diphosphate + H(+). This chain is Tryptophan--tRNA ligase, cytoplasmic (wrs1), found in Schizosaccharomyces pombe (strain 972 / ATCC 24843) (Fission yeast).